A 722-amino-acid polypeptide reads, in one-letter code: D-(-)-3-hydroxybutyrate oligomer hydrolase (722 aa).

An N-terminal signal peptide occupies residues 1–25; sequence MKTMQGKGSGRRLRGALLVTMAASG. S319 (charge relay system) is an active-site residue.

Belongs to the D-(-)-3-hydroxybutyrate oligomer hydrolase family.

It localises to the secreted. It catalyses the reaction (3R)-hydroxybutanoate dimer + H2O = 2 (R)-3-hydroxybutanoate + H(+). It participates in lipid metabolism; butanoate metabolism. With respect to regulation, inhibited by diisopropylfluorophosphate (DFP). In terms of biological role, participates in the degradation of poly-3-hydroxybutyrate (PHB). It works downstream of poly(3-hydroxybutyrate) depolymerase, hydrolyzing D(-)-3-hydroxybutyrate oligomers of various length (3HB-oligomers) into 3HB-monomers. The sequence is that of D-(-)-3-hydroxybutyrate oligomer hydrolase from Ralstonia pickettii (Burkholderia pickettii).